The chain runs to 581 residues: Protein alan shepard (581 aa).

The segment covering 1–10 has biased composition (pro residues); the sequence is MHPRYSPAPP. A disordered region spans residues 1–73; that stretch reads MHPRYSPAPP…AVTAAPPTPR (73 aa). Residue Y5 is modified to Phosphotyrosine. The span at 35–54 shows a compositional bias: polar residues; it reads ANNSQQLPPQMPRSQNYANG. The span at 55-68 shows a compositional bias: low complexity; it reads SSSSAAAASAVTAA. Phosphotyrosine occurs at positions 128 and 146. Residues 168 to 226 are compositionally biased toward low complexity; sequence PATTTYGQRVPTAASPSNTNSSSSSNTGSQSGTLSTSLSHTTNTNTNMGPNGTAQNQNQ. The interval 168 to 234 is disordered; that stretch reads PATTTYGQRV…NQQGGGGEQL (67 aa). 2 consecutive RRM domains span residues 237 to 310 and 316 to 395; these read TNLY…MAKQ and TNLY…FADG. The disordered stretch occupies residues 555–581; that stretch reads MTDSEQASTAASPDEAYTQYPHQAAPK.

In terms of biological role, has a role in the perception of gravity. The polypeptide is Protein alan shepard (Drosophila willistoni (Fruit fly)).